The chain runs to 244 residues: Flavin-dependent thymidylate synthase (244 aa).

In terms of domain architecture, ThyX spans 7–199; that stretch reads PRVFLIASWG…PNLARLVWED (193 aa). FAD-binding positions include Ser-60 and 83–85; that span reads RHR. DUMP contacts are provided by residues 80-83, 93-95, and Arg-137; these read QFIR and SQR. A ThyX motif motif is present at residues 83–93; it reads RHRMASYWSES. Residues 153-155 and Asn-160 contribute to the FAD site; that span reads NAR. DUMP is bound at residue Arg-165. Arg-165 functions as the Involved in ionization of N3 of dUMP, leading to its activation in the catalytic mechanism.

The protein belongs to the thymidylate synthase ThyX family. Homotetramer. It depends on FAD as a cofactor.

The enzyme catalyses dUMP + (6R)-5,10-methylene-5,6,7,8-tetrahydrofolate + NADPH + H(+) = dTMP + (6S)-5,6,7,8-tetrahydrofolate + NADP(+). The protein operates within pyrimidine metabolism; dTTP biosynthesis. In terms of biological role, catalyzes the reductive methylation of 2'-deoxyuridine-5'-monophosphate (dUMP) to 2'-deoxythymidine-5'-monophosphate (dTMP) while utilizing 5,10-methylenetetrahydrofolate (mTHF) as the methyl donor, and NADPH and FADH(2) as the reductant. In Pyrobaculum aerophilum (strain ATCC 51768 / DSM 7523 / JCM 9630 / CIP 104966 / NBRC 100827 / IM2), this protein is Flavin-dependent thymidylate synthase.